The primary structure comprises 554 residues: D-3-phosphoglycerate dehydrogenase (554 aa).

Residues 177–178 (KI), D197, 256–258 (CSR), and D282 contribute to the NAD(+) site. R258 is an active-site residue. Residue E287 is part of the active site. H305 acts as the Proton donor in catalysis. NAD(+) is bound at residue 305-308 (HLGA). The ACT domain occupies 482 to 554 (MLFTLHRDMP…GIRDAYTVKL (73 aa)).

This sequence belongs to the D-isomer specific 2-hydroxyacid dehydrogenase family.

It carries out the reaction (2R)-3-phosphoglycerate + NAD(+) = 3-phosphooxypyruvate + NADH + H(+). The catalysed reaction is (R)-2-hydroxyglutarate + NAD(+) = 2-oxoglutarate + NADH + H(+). Its pathway is amino-acid biosynthesis; L-serine biosynthesis; L-serine from 3-phospho-D-glycerate: step 1/3. Its function is as follows. Catalyzes the reversible oxidation of 3-phospho-D-glycerate to 3-phosphonooxypyruvate, the first step of the phosphorylated L-serine biosynthesis pathway. Also catalyzes the reversible oxidation of 2-hydroxyglutarate to 2-oxoglutarate. The chain is D-3-phosphoglycerate dehydrogenase (serA) from Synechocystis sp. (strain ATCC 27184 / PCC 6803 / Kazusa).